We begin with the raw amino-acid sequence, 362 residues long: Leucoanthocyanidin dioxygenase (362 aa).

The Fe2OG dioxygenase domain occupies 211–313 (MEELLLQKKI…RISWAVFCEP (103 aa)). Residues H238, D240, and H294 each coordinate Fe cation.

The protein belongs to the iron/ascorbate-dependent oxidoreductase family. Requires Fe cation as cofactor. L-ascorbate is required as a cofactor.

The enzyme catalyses a (2R,3S,4S)-leucoanthocyanidin + 2-oxoglutarate + O2 = a 4-H-anthocyanidin with a 3-hydroxy group + succinate + CO2 + 2 H2O. The protein operates within pigment biosynthesis; anthocyanin biosynthesis. Its function is as follows. Oxidation of leucoanthocyanidins into anthocyanidins. The sequence is that of Leucoanthocyanidin dioxygenase from Vitis vinifera (Grape).